A 698-amino-acid chain; its full sequence is Glycine--tRNA ligase beta subunit (698 aa).

This sequence belongs to the class-II aminoacyl-tRNA synthetase family. In terms of assembly, tetramer of two alpha and two beta subunits.

It localises to the cytoplasm. The catalysed reaction is tRNA(Gly) + glycine + ATP = glycyl-tRNA(Gly) + AMP + diphosphate. The sequence is that of Glycine--tRNA ligase beta subunit from Xanthomonas campestris pv. campestris (strain B100).